Consider the following 691-residue polypeptide: DNA ligase (691 aa).

NAD(+) is bound by residues 41 to 45 (DAEYD), 90 to 91 (SL), and E130. Catalysis depends on K132, which acts as the N6-AMP-lysine intermediate. R153, E190, K307, and K331 together coordinate NAD(+). Positions 425, 428, 443, and 449 each coordinate Zn(2+). A BRCT domain is found at 610-691 (APQGVLAGKT…LHQLLEGNTP (82 aa)).

It belongs to the NAD-dependent DNA ligase family. LigA subfamily. Mg(2+) serves as cofactor. The cofactor is Mn(2+).

It catalyses the reaction NAD(+) + (deoxyribonucleotide)n-3'-hydroxyl + 5'-phospho-(deoxyribonucleotide)m = (deoxyribonucleotide)n+m + AMP + beta-nicotinamide D-nucleotide.. In terms of biological role, DNA ligase that catalyzes the formation of phosphodiester linkages between 5'-phosphoryl and 3'-hydroxyl groups in double-stranded DNA using NAD as a coenzyme and as the energy source for the reaction. It is essential for DNA replication and repair of damaged DNA. The sequence is that of DNA ligase from Burkholderia lata (strain ATCC 17760 / DSM 23089 / LMG 22485 / NCIMB 9086 / R18194 / 383).